A 151-amino-acid polypeptide reads, in one-letter code: Small ribosomal subunit protein uS15 (151 aa).

Basic residues predominate over residues methionine 1 to arginine 11. The tract at residues methionine 1–threonine 24 is disordered.

Belongs to the universal ribosomal protein uS15 family. In terms of assembly, part of the 30S ribosomal subunit.

In Pyrobaculum calidifontis (strain DSM 21063 / JCM 11548 / VA1), this protein is Small ribosomal subunit protein uS15.